Reading from the N-terminus, the 426-residue chain is Glutamyl-tRNA(Gln) amidotransferase subunit D (426 aa).

Positions 82-413 constitute an Asparaginase/glutaminase domain; sequence KNISILSTGG…KDAKKLICKN (332 aa). Residues Thr-92, Thr-168, Asp-169, and Lys-245 contribute to the active site.

This sequence belongs to the asparaginase 1 family. GatD subfamily. Heterodimer of GatD and GatE.

It catalyses the reaction L-glutamyl-tRNA(Gln) + L-glutamine + ATP + H2O = L-glutaminyl-tRNA(Gln) + L-glutamate + ADP + phosphate + H(+). Its function is as follows. Allows the formation of correctly charged Gln-tRNA(Gln) through the transamidation of misacylated Glu-tRNA(Gln) in organisms which lack glutaminyl-tRNA synthetase. The reaction takes place in the presence of glutamine and ATP through an activated gamma-phospho-Glu-tRNA(Gln). The GatDE system is specific for glutamate and does not act on aspartate. The protein is Glutamyl-tRNA(Gln) amidotransferase subunit D of Methanococcus vannielii (strain ATCC 35089 / DSM 1224 / JCM 13029 / OCM 148 / SB).